We begin with the raw amino-acid sequence, 569 residues long: MSFSMSRKQYADMFGPTVGDAIRLADSELFIEIEKDYTTYGDEVKFGGGKVIRDGMGQHPLATSDECVDLVLTNAIIVDYTGIYKADIGIKDGMIASIGKAGNPLLMDGVDMVIGAATEVIAAEGMIVTAGGIDAHIHFICPQQIETALASGVTTMIGGGTGPATGTNATTCTPGPWNIHRMLQAAEEFPINLGFLGKGNCSDEAPLKEQIEAGAVGLKLHEDWGSTAAAIDTCLKVADRYDVQVAIHTDTLNEGGFVEDTLKAIDGRVIHTYHTEGAGGGHAPDIIKAAGFPNILPSSTNPTRPYTINTLEEHLDMLMVCHHLDANIPEDIAFADSRIRKETIAAEDVLHDLGVFSMISSDSQAMGRVGEVIIRTWQTADKMKKQRGKLQEDNGVGDNFRVKRYIAKYTINPAIAHGIADYVGSVEVGKLADLVVWNPAFFGVKPELVLKGGMIAYSTMGDPNASIPTPQPVLYRPMFAAKGDAKYQTSITFVSKAAYEKGIHEQLGLKKKVKPVHGIRKLTKKDLILNDKTPKIDVDPQTYEVKVDGQLVTCEPAEIVPMAQRYFLF.

The region spanning 131–569 (GGIDAHIHFI…VPMAQRYFLF (439 aa)) is the Urease domain. Histidine 136, histidine 138, and lysine 219 together coordinate Ni(2+). Position 219 is an N6-carboxylysine (lysine 219). Histidine 221 contacts substrate. Ni(2+)-binding residues include histidine 248 and histidine 274. The active-site Proton donor is histidine 322. Aspartate 362 is a Ni(2+) binding site.

This sequence belongs to the metallo-dependent hydrolases superfamily. Urease alpha subunit family. Heterotrimer of UreA (gamma), UreB (beta) and UreC (alpha) subunits. Three heterotrimers associate to form the active enzyme. Ni cation serves as cofactor. In terms of processing, carboxylation allows a single lysine to coordinate two nickel ions.

The protein resides in the cytoplasm. The catalysed reaction is urea + 2 H2O + H(+) = hydrogencarbonate + 2 NH4(+). It participates in nitrogen metabolism; urea degradation; CO(2) and NH(3) from urea (urease route): step 1/1. The polypeptide is Urease subunit alpha (Bacillus sp. (strain TB-90)).